Consider the following 303-residue polypeptide: Methionyl-tRNA formyltransferase (303 aa).

108-111 (SDLP) serves as a coordination point for (6S)-5,6,7,8-tetrahydrofolate.

The protein belongs to the Fmt family.

It catalyses the reaction L-methionyl-tRNA(fMet) + (6R)-10-formyltetrahydrofolate = N-formyl-L-methionyl-tRNA(fMet) + (6S)-5,6,7,8-tetrahydrofolate + H(+). In terms of biological role, attaches a formyl group to the free amino group of methionyl-tRNA(fMet). The formyl group appears to play a dual role in the initiator identity of N-formylmethionyl-tRNA by promoting its recognition by IF2 and preventing the misappropriation of this tRNA by the elongation apparatus. The polypeptide is Methionyl-tRNA formyltransferase (Rickettsia peacockii (strain Rustic)).